The primary structure comprises 342 residues: Aristolochene synthase prx2 (342 aa).

Residues Asp115, Asn244, Ser248, and Glu252 each coordinate Mg(2+). 2 residues coordinate (2E,6E)-farnesyl diphosphate: Arg340 and Tyr341.

The protein belongs to the terpene synthase family. In terms of assembly, homodimer. Mg(2+) is required as a cofactor.

The enzyme catalyses (2E,6E)-farnesyl diphosphate = (+)-aristolochene + diphosphate. Its pathway is sesquiterpene biosynthesis; aristolochene biosynthesis; aristolochene from farnesyl diphosphate: step 1/1. Functionally, aristolochene synthase; part of the gene cluster that mediates the biosynthesis of PR-toxin, a bicyclic sesquiterpene belonging to the eremophilane class and acting as a mycotoxin. The first step of the pathway is catalyzed by the aristolochene synthase which performs the cyclization of trans,trans-farnesyl diphosphate (FPP) to the bicyclic sesquiterpene aristolochene. Following the formation of aristolochene, the non-oxygenated aristolochene is converted to the trioxygenated intermediate eremofortin B, via 7-epi-neopetasone. This conversion appears to involve three enzymes, a hydroxysterol oxidase-like enzyme, the quinone-oxidase prx3 that forms the quinone-type-structure in the bicyclic nucleus of aristolochene with the C8-oxo group and the C-3 hydroxyl group, and the P450 monooxygenase prx9 that introduces the epoxide at the double bond between carbons 1 and 2. No monoxy or dioxy-intermediates have been reported to be released to the broth, so these three early oxidative reactions may be coupled together. Eremofortin B is further oxidized by another P450 monooxygenase, that introduces a second epoxide between carbons 7 and 11 prior to acetylation to eremofortin A by the acetyltransferase prx11. The second epoxidation may be performed by a second P450 monooxygenase. After the acetylation step, the conversion of eremofortin A to eremofortin C and then to PR-toxin requires only two enzymes. First the conversion of eremofortin A to eremofortin C proceeds by oxidation of the side chain of the molecule at C-12 and is catalyzed by the short-chain oxidoreductase prx1. The cytochrome P450 monooxygenase prx8 also plays a role in this step. The primary alcohol formed at C-12 is finally oxidized by the short-chain alcohol dehydrogenase prx4 that forms PR-toxin. This is Aristolochene synthase prx2 from Penicillium rubens (strain ATCC 28089 / DSM 1075 / NRRL 1951 / Wisconsin 54-1255) (Penicillium chrysogenum).